Here is a 591-residue protein sequence, read N- to C-terminus: Tricyclene synthase, chloroplastic (591 aa).

The transit peptide at 1–45 (MATLLQIGSGVIYSNALRKTLRRPQSSTCIIVTETTPCNKSPTVQ) directs the protein to the chloroplast. Positions 302, 339, 343, 481, and 484 each coordinate (2E)-geranyl diphosphate. Positions 339 and 343 each coordinate Mg(2+). The short motif at 339–343 (DDIYD) is the DDXXD motif element. 3 residues coordinate Mg(2+): Asn484, Thr488, and Glu492.

It belongs to the terpene synthase family. Tpsb subfamily. Mg(2+) is required as a cofactor. The cofactor is Mn(2+). Predominantly expressed in flowers but also in leaves, siliques and in stems.

The protein localises to the plastid. It localises to the chloroplast stroma. The catalysed reaction is (2E)-geranyl diphosphate = beta-myrcene + diphosphate. It catalyses the reaction (2E)-geranyl diphosphate = tricyclene + diphosphate. It carries out the reaction (2E)-geranyl diphosphate = (E)-beta-ocimene + diphosphate. The protein operates within secondary metabolite biosynthesis; terpenoid biosynthesis. Involved in monoterpene (C10) biosynthesis. The major product is beta-myrcene (56%) followed by (E)-beta-ocimene (20%) and minor amounts (less than 5%) of the cyclic monoterpene (-)-limonene, (+)-limonene, 2-carene and tricyclene. This chain is Tricyclene synthase, chloroplastic, found in Arabidopsis thaliana (Mouse-ear cress).